Here is a 608-residue protein sequence, read N- to C-terminus: MSDKSDLKAELERKKQRLAQIREEKKRKEEERKKKEADMQQKKEPVPDDSDLDRKRRETEALLQSIGISPEPPLVPTPMSPSSKSVSTPSEAGSQDSGDLGPLTRRRLHKLGVSKITQVDFLPREVVSYSKETQTPLATHQSEEDEDDEEMVEPKGDQDSEQENEDKKQEVKEAPPRELTEEEKQQILHSEEFLIFFDRTIRVIERALAEDSDIFFDYSGRELEEKDGDVQAGANLSFNRQFYDEHWSKHRVVTCMDWSLQYPELMVASYNNNEDAPHEPDGVALVWNMKFKKTTPEYVFHCQSSVMSVCFARFHPNLVVGGTYSGQIVLWDNRSHRRTPVQRTPLSAAAHTHPVYCVNVVGTQNAHNLITVSTDGKMCSWSLDMLSTPQESMELVYNKSKPVAVTGMAFPTGDVNNFVVGSEEGTVYTACRHGSKAGIGEVFEGHQGPVTGINCHMAVGPIDFSHLFVTSSFDWTVKLWTTKHNKPLYSFEDNADYVYDVMWSPVHPALFACVDGMGRLDLWNLNNDTEVPTASVAIEGASALNRVRWAQGGKEVAVGDSEGRIWIYDVGELAVPHNDEWTRFARTLVEIRANRADSEEEGAVELSA.

Basic and acidic residues-rich tracts occupy residues 1–13 and 20–60; these read MSDK…ELER and QIRE…RETE. A disordered region spans residues 1–106; sequence MSDKSDLKAE…SGDLGPLTRR (106 aa). At S2 the chain carries N-acetylserine. Phosphoserine is present on S50. Over residues 70 to 79 the composition is skewed to pro residues; that stretch reads PEPPLVPTPM. Residues 80–90 are compositionally biased toward low complexity; it reads SPSSKSVSTPS. The residue at position 83 (S83) is a Phosphoserine. The residue at position 88 (T88) is a Phosphothreonine. Phosphoserine is present on residues S90, S94, and S97. Residues 110–126 form an interaction with DYNLT1 region; the sequence is KLGVSKITQVDFLPREV. Residues 132–184 are disordered; the sequence is ETQTPLATHQSEEDEDDEEMVEPKGDQDSEQENEDKKQEVKEAPPRELTEEEK. T139 is subject to Phosphothreonine. A phosphoserine mark is found at S142 and S160. Positions 165–184 are enriched in basic and acidic residues; sequence EDKKQEVKEAPPRELTEEEK. WD repeat units follow at residues 248–297, 301–341, 350–391, 400–440, 445–490, 493–533, and 539–578; these read SKHR…TTPE, HCQS…RTPV, AHTH…TPQE, SKPV…AGIG, GHQG…PLYS, DNAD…EVPT, and EGAS…VPHN. S598 carries the phosphoserine modification.

The protein belongs to the dynein intermediate chain family. As to quaternary structure, homodimer. The cytoplasmic dynein 1 complex consists of two catalytic heavy chains (HCs) and a number of non-catalytic subunits presented by intermediate chains (ICs), light intermediate chains (LICs) and light chains (LCs); the composition seems to vary in respect to the IC, LIC and LC composition. The heavy chain homodimer serves as a scaffold for the probable homodimeric assembly of the respective non-catalytic subunits. The ICs and LICs bind directly to the HC dimer and the LCs assemble on the IC dimer. Interacts with DYNC1H1. Interacts with DYNLT1 and DYNLT3. Interacts with DCTN1. Interacts with MCRS1; the interaction is required for the proper distribution of centriolar satellites.

The protein resides in the cytoplasm. The protein localises to the chromosome. Its subcellular location is the centromere. It is found in the kinetochore. It localises to the cytoskeleton. The protein resides in the spindle pole. Acts as one of several non-catalytic accessory components of the cytoplasmic dynein 1 complex that are thought to be involved in linking dynein to cargos and to adapter proteins that regulate dynein function. Cytoplasmic dynein 1 acts as a motor for the intracellular retrograde motility of vesicles and organelles along microtubules. The intermediate chains mediate the binding of dynein to dynactin via its 150 kDa component (p150-glued) DCTN1. May play a role in mediating the interaction of cytoplasmic dynein with membranous organelles and kinetochores. The polypeptide is Cytoplasmic dynein 1 intermediate chain 1 (DYNC1I1) (Bos taurus (Bovine)).